The primary structure comprises 128 residues: Large ribosomal subunit protein bL19 (128 aa).

This sequence belongs to the bacterial ribosomal protein bL19 family.

This protein is located at the 30S-50S ribosomal subunit interface and may play a role in the structure and function of the aminoacyl-tRNA binding site. The chain is Large ribosomal subunit protein bL19 from Aromatoleum aromaticum (strain DSM 19018 / LMG 30748 / EbN1) (Azoarcus sp. (strain EbN1)).